A 211-amino-acid polypeptide reads, in one-letter code: Probable GTP-binding protein EngB (211 aa).

Positions 30–204 constitute an EngB-type G domain; sequence EGFEVAFAGR…YTVLAGWMEL (175 aa). GTP-binding positions include 38–45, 64–68, 82–85, 149–152, and 182–185; these read GRSNAGKS, GRTQL, DLPG, TKAD, and LFSA. 2 residues coordinate Mg(2+): Ser45 and Thr66.

It belongs to the TRAFAC class TrmE-Era-EngA-EngB-Septin-like GTPase superfamily. EngB GTPase family. Mg(2+) serves as cofactor.

Necessary for normal cell division and for the maintenance of normal septation. This chain is Probable GTP-binding protein EngB, found in Pseudomonas syringae pv. tomato (strain ATCC BAA-871 / DC3000).